We begin with the raw amino-acid sequence, 169 residues long: Oleosin Ara h 10.0101 (169 aa).

The next 2 helical transmembrane spans lie at 39–59 and 73–93; these read VIAV…AGLA and LFIL…LSVA. The span at 146 to 156 shows a compositional bias: basic and acidic residues; it reads KDVGQKTKEVG. A disordered region spans residues 146–169; it reads KDVGQKTKEVGQEIQTKAQDSKRT.

It belongs to the oleosin family. As to expression, expressed in seeds (at protein level).

It is found in the lipid droplet. Its subcellular location is the membrane. In terms of biological role, may have a structural role to stabilize the lipid body during desiccation of the seed by preventing coalescence of the oil. Probably interacts with both lipid and phospholipid moieties of lipid bodies. May also provide recognition signals for specific lipase anchorage in lipolysis during seedling growth. The chain is Oleosin Ara h 10.0101 from Arachis hypogaea (Peanut).